Here is a 227-residue protein sequence, read N- to C-terminus: Germin-like protein subfamily 3 member 2 (227 aa).

An N-terminal signal peptide occupies residues 1–24 (MEANTLFLLKALCLLCFNVCFTLA). Cysteine 34 and cysteine 54 form a disulfide bridge. Asparagine 56 and asparagine 75 each carry an N-linked (GlcNAc...) asparagine glycan. The Cupin type-1 domain maps to 68 to 213 (SGLKTAGNFT…AFGLSLKQIG (146 aa)). Mn(2+) contacts are provided by histidine 115, histidine 117, glutamate 122, and histidine 161.

This sequence belongs to the germin family. As to quaternary structure, oligomer (believed to be a pentamer but probably hexamer).

The protein resides in the secreted. It localises to the extracellular space. Its subcellular location is the apoplast. In terms of biological role, may play a role in plant defense. Probably has no oxalate oxidase activity even if the active site is conserved. The sequence is that of Germin-like protein subfamily 3 member 2 from Arabidopsis thaliana (Mouse-ear cress).